A 440-amino-acid chain; its full sequence is Serine hydroxymethyltransferase (440 aa).

Residues leucine 119 and 123–125 contribute to the (6S)-5,6,7,8-tetrahydrofolate site; that span reads GHL. Lysine 228 is modified (N6-(pyridoxal phosphate)lysine). 370–372 is a (6S)-5,6,7,8-tetrahydrofolate binding site; the sequence is SPF.

The protein belongs to the SHMT family. In terms of assembly, homodimer. Pyridoxal 5'-phosphate is required as a cofactor.

The protein resides in the cytoplasm. It catalyses the reaction (6R)-5,10-methylene-5,6,7,8-tetrahydrofolate + glycine + H2O = (6S)-5,6,7,8-tetrahydrofolate + L-serine. Its pathway is one-carbon metabolism; tetrahydrofolate interconversion. The protein operates within amino-acid biosynthesis; glycine biosynthesis; glycine from L-serine: step 1/1. Catalyzes the reversible interconversion of serine and glycine with tetrahydrofolate (THF) serving as the one-carbon carrier. This reaction serves as the major source of one-carbon groups required for the biosynthesis of purines, thymidylate, methionine, and other important biomolecules. Also exhibits THF-independent aldolase activity toward beta-hydroxyamino acids, producing glycine and aldehydes, via a retro-aldol mechanism. The sequence is that of Serine hydroxymethyltransferase from Chlorobaculum parvum (strain DSM 263 / NCIMB 8327) (Chlorobium vibrioforme subsp. thiosulfatophilum).